Consider the following 244-residue polypeptide: Ribonuclease PH (244 aa).

Phosphate-binding positions include arginine 87 and 125 to 127; that span reads GTR.

It belongs to the RNase PH family. As to quaternary structure, homohexameric ring arranged as a trimer of dimers.

The enzyme catalyses tRNA(n+1) + phosphate = tRNA(n) + a ribonucleoside 5'-diphosphate. Functionally, phosphorolytic 3'-5' exoribonuclease that plays an important role in tRNA 3'-end maturation. Removes nucleotide residues following the 3'-CCA terminus of tRNAs; can also add nucleotides to the ends of RNA molecules by using nucleoside diphosphates as substrates, but this may not be physiologically important. Probably plays a role in initiation of 16S rRNA degradation (leading to ribosome degradation) during starvation. This is Ribonuclease PH from Synechococcus sp. (strain JA-2-3B'a(2-13)) (Cyanobacteria bacterium Yellowstone B-Prime).